The primary structure comprises 274 residues: MQSLHGNCLIAYARHKYILTMVNGEYRYFNGGDLVFADASQIRVDKCVENFVLVSRDTLSLFLPMLKEEALNLHAHKKVSSLLVHHCSRDIPVFQEVAQLSQNKNLRYAEMLRKRALIFALLSVFLEDDHFIPLLLNVLQPNMRTRVCTVINNNIAHEWTLARIASELLMSPSLLKKKLREEETSYSQLLTECRMQRALQLIVIHGFSIKRVAVSCGYHSVSYFIYVFRNYYGMTPTEYQERSAQGLPNRDSAASIVAQGNFYGTDCSAEGIRL.

Residues 145 to 242 (TRVCTVINNN…GMTPTEYQER (98 aa)) enclose the HTH araC/xylS-type domain. DNA-binding regions (H-T-H motif) lie at residues 162–183 (ARIA…REEE) and 209–232 (IKRV…RNYY).

Homodimer.

In terms of biological role, positively regulates the expression of about fifteen genes involved in acid resistance such as gadA, gadB and gadC. Depending on the conditions (growth phase and medium), can repress gadW. This is HTH-type transcriptional regulator GadX (gadX) from Escherichia coli O157:H7.